The sequence spans 442 residues: Exodeoxyribonuclease 7 large subunit (442 aa).

It belongs to the XseA family. In terms of assembly, heterooligomer composed of large and small subunits.

The protein resides in the cytoplasm. It catalyses the reaction Exonucleolytic cleavage in either 5'- to 3'- or 3'- to 5'-direction to yield nucleoside 5'-phosphates.. Its function is as follows. Bidirectionally degrades single-stranded DNA into large acid-insoluble oligonucleotides, which are then degraded further into small acid-soluble oligonucleotides. This is Exodeoxyribonuclease 7 large subunit from Shewanella woodyi (strain ATCC 51908 / MS32).